Reading from the N-terminus, the 281-residue chain is NADPH-dependent 7-cyano-7-deazaguanine reductase (281 aa).

Position 87-89 (87-89 (VES)) interacts with substrate. An NADPH-binding site is contributed by 89 to 90 (SK). C188 serves as the catalytic Thioimide intermediate. Catalysis depends on D195, which acts as the Proton donor. Position 227–228 (227–228 (HE)) interacts with substrate. Residue 256 to 257 (RG) participates in NADPH binding.

It belongs to the GTP cyclohydrolase I family. QueF type 2 subfamily. As to quaternary structure, homodimer.

Its subcellular location is the cytoplasm. The catalysed reaction is 7-aminomethyl-7-carbaguanine + 2 NADP(+) = 7-cyano-7-deazaguanine + 2 NADPH + 3 H(+). It participates in tRNA modification; tRNA-queuosine biosynthesis. Catalyzes the NADPH-dependent reduction of 7-cyano-7-deazaguanine (preQ0) to 7-aminomethyl-7-deazaguanine (preQ1). This chain is NADPH-dependent 7-cyano-7-deazaguanine reductase, found in Aliivibrio salmonicida (strain LFI1238) (Vibrio salmonicida (strain LFI1238)).